The primary structure comprises 104 residues: Large ribosomal subunit protein uL24 (104 aa).

It belongs to the universal ribosomal protein uL24 family. Part of the 50S ribosomal subunit.

Its function is as follows. One of two assembly initiator proteins, it binds directly to the 5'-end of the 23S rRNA, where it nucleates assembly of the 50S subunit. One of the proteins that surrounds the polypeptide exit tunnel on the outside of the subunit. The protein is Large ribosomal subunit protein uL24 of Rhodopseudomonas palustris (strain BisB5).